We begin with the raw amino-acid sequence, 90 residues long: Probable Fe(2+)-trafficking protein (90 aa).

This sequence belongs to the Fe(2+)-trafficking protein family.

Could be a mediator in iron transactions between iron acquisition and iron-requiring processes, such as synthesis and/or repair of Fe-S clusters in biosynthetic enzymes. This chain is Probable Fe(2+)-trafficking protein, found in Saccharophagus degradans (strain 2-40 / ATCC 43961 / DSM 17024).